A 210-amino-acid polypeptide reads, in one-letter code: LexA repressor (210 aa).

Positions 25–44 form a DNA-binding region, H-T-H motif; it reads AGQVAQEVGITKQAISQQVN. Active-site for autocatalytic cleavage activity residues include serine 120 and lysine 159.

It belongs to the peptidase S24 family. In terms of assembly, homodimer.

It catalyses the reaction Hydrolysis of Ala-|-Gly bond in repressor LexA.. Its function is as follows. Represses a number of genes involved in the response to DNA damage (SOS response), including recA and lexA. In the presence of single-stranded DNA, RecA interacts with LexA causing an autocatalytic cleavage which disrupts the DNA-binding part of LexA, leading to derepression of the SOS regulon and eventually DNA repair. In Deinococcus radiodurans (strain ATCC 13939 / DSM 20539 / JCM 16871 / CCUG 27074 / LMG 4051 / NBRC 15346 / NCIMB 9279 / VKM B-1422 / R1), this protein is LexA repressor.